The chain runs to 179 residues: Putative undecaprenyl-phosphate N-acetylgalactosaminyl 1-phosphate transferase (179 aa).

The chain crosses the membrane as a helical span at residues 39 to 59; that stretch reads IWFALIGLAIALPMIAVFSIL.

The protein belongs to the bacterial sugar transferase family.

It localises to the cell membrane. The enzyme catalyses di-trans,octa-cis-undecaprenyl phosphate + UDP-N-acetyl-alpha-D-galactosamine = N-acetyl-alpha-D-galactosaminyl-di-trans,octa-cis-undecaprenyl diphosphate + UMP. The protein operates within cell wall biogenesis; teichuronic acid biosynthesis. Its function is as follows. Might mediate the very first reaction in teichuronic synthesis, i.e. the formation of lipid-linked N-acetylglucosamine. This is Putative undecaprenyl-phosphate N-acetylgalactosaminyl 1-phosphate transferase (tuaA) from Bacillus subtilis (strain 168).